Here is a 93-residue protein sequence, read N- to C-terminus: Small ribosomal subunit protein uS19 (93 aa).

It belongs to the universal ribosomal protein uS19 family.

Functionally, protein S19 forms a complex with S13 that binds strongly to the 16S ribosomal RNA. In Pseudarthrobacter chlorophenolicus (strain ATCC 700700 / DSM 12829 / CIP 107037 / JCM 12360 / KCTC 9906 / NCIMB 13794 / A6) (Arthrobacter chlorophenolicus), this protein is Small ribosomal subunit protein uS19.